A 1534-amino-acid chain; its full sequence is Dicer-like protein 1 (1534 aa).

Residues 36-70 (PSAEPGVEHDQISPGESDEEIEENISDQNNSSSQK) form a disordered region. The segment covering 51–60 (ESDEEIEENI) has biased composition (acidic residues). The region spanning 130 to 311 (LFERAKAQNT…AAATRLETLL (182 aa)) is the Helicase ATP-binding domain. 143-150 (LDTGSGKT) is an ATP binding site. The DEAH box motif lies at 256-259 (DEAH). In terms of domain architecture, Helicase C-terminal spans 456 to 613 (ELSKHFSHAP…FCETLPEDRI (158 aa)). The region spanning 648–738 (AIAILARYAS…KSIYHKRLPA (91 aa)) is the Dicer dsRNA-binding fold domain. One can recognise a PAZ domain in the interval 888-1016 (KTVTFVQEND…ICAEPLKISA (129 aa)). 2 RNase III domains span residues 1054–1199 (SDYA…LSGG) and 1250–1402 (ALQV…VDSD). Glu-1291, Asp-1388, and Glu-1391 together coordinate Mg(2+). A DRBM domain is found at 1436 to 1504 (TFLHNRLANE…SERALVVLDG (69 aa)). Positions 1448, 1475, 1516, and 1518 each coordinate Zn(2+).

This sequence belongs to the helicase family. Dicer subfamily. Mg(2+) serves as cofactor. Mn(2+) is required as a cofactor.

Its function is as follows. Dicer-like endonuclease involved in cleaving double-stranded RNA in the RNA interference (RNAi) pathway. Produces 21 to 25 bp dsRNAs (siRNAs) which target the selective destruction of homologous RNAs leading to sequence-specific suppression of gene expression, called post-transcriptional gene silencing (PTGS). Part of a broad host defense response against viral infection and transposons. This Aspergillus clavatus (strain ATCC 1007 / CBS 513.65 / DSM 816 / NCTC 3887 / NRRL 1 / QM 1276 / 107) protein is Dicer-like protein 1 (dcl1).